Here is a 92-residue protein sequence, read N- to C-terminus: Subtilisin inhibitor 1 (92 aa).

Residues Gln-1–Asn-12 are compositionally biased toward polar residues. Positions Gln-1–Thr-31 are disordered.

Belongs to the protease inhibitor I13 (potato type I serine protease inhibitor) family.

Its function is as follows. Inhibitor of subtilisin. The polypeptide is Subtilisin inhibitor 1 (Phaseolus angularis (Azuki bean)).